Reading from the N-terminus, the 212-residue chain is uncharacterized protein (212 aa).

A helical membrane pass occupies residues 5–25; the sequence is IFIILIAVLLIGVNIKKIAAA.

Its subcellular location is the membrane. This is an uncharacterized protein from Borreliella burgdorferi (strain ATCC 35210 / DSM 4680 / CIP 102532 / B31) (Borrelia burgdorferi).